Consider the following 510-residue polypeptide: Cytochrome P450 705A20 (510 aa).

Residues 7 to 27 form a helical membrane-spanning segment; the sequence is QHCFSFILLCFFSLLCYSLLF.

The protein belongs to the cytochrome P450 family. Heme is required as a cofactor.

The protein resides in the membrane. This Arabidopsis thaliana (Mouse-ear cress) protein is Cytochrome P450 705A20 (CYP705A20).